The primary structure comprises 87 residues: Non-structural protein NS3 (87 aa).

Its subcellular location is the host nucleus. Functionally, plays a role in viral DNA replication. The protein is Non-structural protein NS3 of Mustela (ADV).